A 730-amino-acid chain; its full sequence is Actin filament-associated protein 1 (730 aa).

Residue Met-1 is modified to N-acetylmethionine. Residues 47–91 (KDHAQKQETANSLPAPPQMPLPEIPQPWLPPDSGPPPLPTSSLPE) are disordered. Positions 60 to 85 (PAPPQMPLPEIPQPWLPPDSGPPPLP) are enriched in pro residues. The SH3-binding signature appears at 71–74 (PQPW). The short motif at 94-97 (YEEA) is the SH2-binding 1 element. Residues 119–140 (SSSYESYDEEEEDGKGKKTRHQ) form a disordered region. Positions 153-249 (DAKICAFLLR…WLKVIKEAYS (97 aa)) constitute a PH 1 domain. Residues 252 to 292 (SGPVDSECPPPPSSPVHKAELEKKLSSERPSSDGEGVVENG) form a disordered region. Over residues 268-283 (HKAELEKKLSSERPSS) the composition is skewed to basic and acidic residues. A phosphoserine mark is found at Ser-282 and Ser-283. In terms of domain architecture, PH 2 spans 347-441 (DVPTCGYLNV…WIGILLAETG (95 aa)). The SH2-binding 2 signature appears at 451–456 (YDYIDV). The disordered stretch occupies residues 512-537 (KGKKPPVASNGVTGKGKTLSSQPKKA). Ser-548 carries the phosphoserine modification. A coiled-coil region spans residues 557–648 (KNRVEADAKR…VKESLKKALA (92 aa)). The interaction with F-actin stretch occupies residues 594–637 (DLRAAIEVNAGRKPQAILEEKLKQLEEECRQKEAERVSLELELT). 3 positions are modified to phosphoserine: Ser-664, Ser-665, and Ser-668. Thr-675 is modified (phosphothreonine). 2 positions are modified to phosphoserine: Ser-679 and Ser-687.

In terms of assembly, monomer and homomultimer. Interacts via its C-terminus with F-actin; probably involving AFAP1 multimers. Interacts with activated SRC SH3-SH2 domains. Interacts via its PH 1 domain with PRKCA, PRKCB and PRKCI. Phosphorylated on tyrosine residues by SRC. As to expression, low expression in normal breast epithelial cell line MCF-10A and in tumorigenic breast cancer cell lines MCF-7, T-47D and ZR-75-1. Highly expressed in the invasive breast cancer cell lines MDA-MB-231 and MDA-MB-435. Overexpressed in prostate carcinoma.

It localises to the cytoplasm. The protein localises to the cytoskeleton. The protein resides in the stress fiber. Functionally, can cross-link actin filaments into both network and bundle structures. May modulate changes in actin filament integrity and induce lamellipodia formation. May function as an adapter molecule that links other proteins, such as SRC and PKC to the actin cytoskeleton. Seems to play a role in the development and progression of prostate adenocarcinoma by regulating cell-matrix adhesions and migration in the cancer cells. The chain is Actin filament-associated protein 1 (AFAP1) from Homo sapiens (Human).